The chain runs to 415 residues: Gamma-glutamyl phosphate reductase (415 aa).

The protein belongs to the gamma-glutamyl phosphate reductase family.

It localises to the cytoplasm. It catalyses the reaction L-glutamate 5-semialdehyde + phosphate + NADP(+) = L-glutamyl 5-phosphate + NADPH + H(+). Its pathway is amino-acid biosynthesis; L-proline biosynthesis; L-glutamate 5-semialdehyde from L-glutamate: step 2/2. Functionally, catalyzes the NADPH-dependent reduction of L-glutamate 5-phosphate into L-glutamate 5-semialdehyde and phosphate. The product spontaneously undergoes cyclization to form 1-pyrroline-5-carboxylate. In Listeria welshimeri serovar 6b (strain ATCC 35897 / DSM 20650 / CCUG 15529 / CIP 8149 / NCTC 11857 / SLCC 5334 / V8), this protein is Gamma-glutamyl phosphate reductase.